The primary structure comprises 881 residues: Putative cation exchanger C521.04c (881 aa).

The segment covering 1-19 (MSQPADINQSESSAETITQ) has biased composition (polar residues). Disordered stretches follow at residues 1 to 39 (MSQPADINQSESSAETITQGRRADRPEETPSSSVYEQNL) and 52 to 142 (ADAT…LRSE). Positions 63–77 (NDRDIYSPREIDQYT) are enriched in basic and acidic residues. Residues 83–95 (RTDPSTSTISNAR) are compositionally biased toward polar residues. Over residues 99–113 (RNSVSRLSRSSSNVR) the composition is skewed to low complexity. Residue S129 is modified to Phosphoserine. The next 8 helical transmembrane spans lie at 200 to 220 (IWLICFGAPLFLVIFICYIFF), 329 to 349 (LIIAPTLLITSAICMFTIFFV), 407 to 427 (IYIIYFDMLALIIPTIFFGFF), 438 to 458 (VFLFTASLVSIIPLAYFIGMA), 471 to 491 (GAFINAFFGSVIEVFLYSVAL), 504 to 524 (IGSILAGLLLMPGLSMCAGAI), 537 to 557 (GATSTMLLFAVLGAFAPTMLF), and 594 to 614 (LPFTYCCSIMLVLAYAIGLWF). Positions 641–717 (VGEPVNQDTA…SQNSHGDDAP (77 aa)) are disordered. Positions 646–657 (NQDTAGNMSDSS) are enriched in polar residues. Residues 678–688 (SSGLSSNGSEN) are compositionally biased toward low complexity. Transmembrane regions (helical) follow at residues 726 to 746 (IILLSATFLYSLIAEILVEHV), 762 to 782 (LTLFALVPNTTEFMNAISFAL), 794 to 814 (SAYALQVCLLQIPCLMGYSLF), 828 to 848 (LFTMVFPTWDMICVMICVFLL), and 859 to 879 (YFKGSILVLAYLVSMLGFTFF).

Belongs to the Ca(2+):cation antiporter (CaCA) (TC 2.A.19) family.

The protein localises to the endoplasmic reticulum membrane. Putative cation exchanger. This Schizosaccharomyces pombe (strain 972 / ATCC 24843) (Fission yeast) protein is Putative cation exchanger C521.04c.